The sequence spans 254 residues: Persulfide dioxygenase ETHE1, mitochondrial (254 aa).

The N-terminal 7 residues, methionine 1–arginine 7, are a transit peptide targeting the mitochondrion. A phosphoserine mark is found at serine 14, serine 17, and serine 19. Residue lysine 32 is modified to N6-acetyllysine; alternate. The residue at position 32 (lysine 32) is an N6-succinyllysine; alternate. Lysine 66 is modified (N6-acetyllysine). Fe cation contacts are provided by histidine 79, histidine 135, and aspartate 154. Lysine 172 carries the post-translational modification N6-acetyllysine; alternate. Residue lysine 172 is modified to N6-succinyllysine; alternate.

Belongs to the metallo-beta-lactamase superfamily. Glyoxalase II family. As to quaternary structure, homodimer. Monomer. Interacts with TST. May interact with RELA. The cofactor is Fe(2+).

It localises to the cytoplasm. Its subcellular location is the nucleus. The protein resides in the mitochondrion matrix. It catalyses the reaction S-sulfanylglutathione + O2 + H2O = sulfite + glutathione + 2 H(+). Functionally, first described as a protein that can shuttle between the nucleus and the cytoplasm and suppress p53-induced apoptosis by sequestering the transcription factor RELA/NFKB3 in the cytoplasm and preventing its accumulation in the nucleus. Sulfur dioxygenase that plays an essential role in hydrogen sulfide catabolism in the mitochondrial matrix. Hydrogen sulfide (H(2)S) is first oxidized by SQRDL, giving rise to cysteine persulfide residues. ETHE1 consumes molecular oxygen to catalyze the oxidation of the persulfide, once it has been transferred to a thiophilic acceptor, such as glutathione (R-SSH). Plays an important role in metabolic homeostasis in mitochondria by metabolizing hydrogen sulfide and preventing the accumulation of supraphysiological H(2)S levels that have toxic effects, due to the inhibition of cytochrome c oxidase. The sequence is that of Persulfide dioxygenase ETHE1, mitochondrial (Ethe1) from Mus musculus (Mouse).